The chain runs to 620 residues: Translocator protein BipB (620 aa).

The tract at residues 58–95 (QCDAQPAAHDARLDDKPALRAPQERDAPPLGASDTGSR) is disordered. Residues 66–84 (HDARLDDKPALRAPQERDA) are compositionally biased toward basic and acidic residues. A coiled-coil region spans residues 309-339 (EMQAKREAELQKKSDEYQAQVKKAEEMQKTM). Transmembrane regions (helical) follow at residues 355-375 (FAAA…GLAL), 401-421 (AILK…LVAC), and 430-450 (LAGA…AAFV).

Belongs to the SctE/SipB/YopB family.

It is found in the secreted. The protein localises to the host membrane. Plays a role in the bacterium-induced formation of multinucleated giant cell (MNGC), which is formed after host cell fusion, as well as in the intercellular spreading of bacteria and in the induction of apoptosis in macrophages. May act in concert with other effector proteins to induce fusion of host cell membranes. The polypeptide is Translocator protein BipB (bipB) (Burkholderia pseudomallei (strain 1106a)).